The primary structure comprises 304 residues: UTP--glucose-1-phosphate uridylyltransferase 1 (304 aa).

Belongs to the UDPGP type 2 family.

The enzyme catalyses alpha-D-glucose 1-phosphate + UTP + H(+) = UDP-alpha-D-glucose + diphosphate. The protein operates within carbohydrate metabolism; nucleotide-sugar metabolism. This is UTP--glucose-1-phosphate uridylyltransferase 1 (hasC1) from Streptococcus pyogenes serotype M18 (strain MGAS8232).